Reading from the N-terminus, the 447-residue chain is Beclin-1 (447 aa).

Positions 44 to 53 are enriched in low complexity; it reads PPLTAAPARP. The interval 44–71 is disordered; that stretch reads PPLTAAPARPGDAQEESALSEEAFTEGR. Residues 105–124 carry the BH3 motif; that stretch reads TMENLSRRLKVTGDLFDIMS. Residues 139–266 adopt a coiled-coil conformation; the sequence is DTLLDQLDTQ…QLDKLKKTNV (128 aa). Positions 242–447 are evolutionary conserved domain (ECD); that stretch reads DELKSVENQM…AWVSSQFYNK (206 aa). Positions 422–447 are required for membrane-association; sequence WTKALKFMLTNLKWGLAWVSSQFYNK.

It belongs to the beclin family. As to quaternary structure, component of the PI3K (PI3KC3/PI3K-III/class III phosphatidylinositol 3-kinase) complex. In terms of processing, may be proteolytically processed by caspases; the C-terminal fragment(s) may induce apoptosis.

It localises to the cytoplasm. The protein localises to the golgi apparatus. It is found in the trans-Golgi network membrane. The protein resides in the endosome membrane. Its subcellular location is the endoplasmic reticulum membrane. It localises to the mitochondrion membrane. The protein localises to the cytoplasmic vesicle. It is found in the autophagosome. In terms of biological role, plays a central role in autophagy. Acts as core subunit of different PI3K complex forms that mediate formation of phosphatidylinositol 3-phosphate and are believed to play a role in multiple membrane trafficking pathways such as initiation of autophagosomes, maturation of autophagosomes and endocytosis. Involved in regulation of degradative endocytic trafficking and required for the abscission step in cytokinesis, probably in the context of PI3KC3-C2. This chain is Beclin-1 (BECN1), found in Gallus gallus (Chicken).